The sequence spans 77 residues: Structural DNA-binding protein p10 (77 aa).

The segment covering 1–12 (MPTKAGTKSTAN) has biased composition (polar residues). Positions 1–38 (MPTKAGTKSTANKKTTKGPSKSGSAKGHTGKTHATALH) are disordered. Low complexity predominate over residues 17–27 (KGPSKSGSAKG).

The protein belongs to the asfivirus P10 family.

The protein localises to the virion. Functionally, may play a role in genome packaging through direct interaction with viral DNA. Binds to ssDNA and dsDNA with the same apparent affinity in vitro. This Ornithodoros (relapsing fever ticks) protein is Structural DNA-binding protein p10.